Reading from the N-terminus, the 265-residue chain is Small ribosomal subunit protein eS4 (265 aa).

The S4 RNA-binding domain maps to 42-104 (LPLILIIRNR…TNENYRLLYD (63 aa)).

The protein belongs to the eukaryotic ribosomal protein eS4 family.

The protein localises to the cytoplasm. The protein is Small ribosomal subunit protein eS4 (RPS4) of Zea mays (Maize).